The chain runs to 226 residues: Phosphatidylserine decarboxylase proenzyme (226 aa).

The Schiff-base intermediate with substrate; via pyruvic acid role is filled by Ser184. At Ser184 the chain carries Pyruvic acid (Ser); by autocatalysis.

It belongs to the phosphatidylserine decarboxylase family. PSD-A subfamily. Heterodimer of a large membrane-associated beta subunit and a small pyruvoyl-containing alpha subunit. The cofactor is pyruvate. Post-translationally, is synthesized initially as an inactive proenzyme. Formation of the active enzyme involves a self-maturation process in which the active site pyruvoyl group is generated from an internal serine residue via an autocatalytic post-translational modification. Two non-identical subunits are generated from the proenzyme in this reaction, and the pyruvate is formed at the N-terminus of the alpha chain, which is derived from the carboxyl end of the proenzyme. The post-translation cleavage follows an unusual pathway, termed non-hydrolytic serinolysis, in which the side chain hydroxyl group of the serine supplies its oxygen atom to form the C-terminus of the beta chain, while the remainder of the serine residue undergoes an oxidative deamination to produce ammonia and the pyruvoyl prosthetic group on the alpha chain.

Its subcellular location is the cell membrane. It catalyses the reaction a 1,2-diacyl-sn-glycero-3-phospho-L-serine + H(+) = a 1,2-diacyl-sn-glycero-3-phosphoethanolamine + CO2. The protein operates within phospholipid metabolism; phosphatidylethanolamine biosynthesis; phosphatidylethanolamine from CDP-diacylglycerol: step 2/2. Its function is as follows. Catalyzes the formation of phosphatidylethanolamine (PtdEtn) from phosphatidylserine (PtdSer). The protein is Phosphatidylserine decarboxylase proenzyme of Ehrlichia canis (strain Jake).